The following is a 403-amino-acid chain: Phosphopentomutase (403 aa).

6 residues coordinate Mn(2+): Asp13, Asp298, His303, Asp339, His340, and His351.

This sequence belongs to the phosphopentomutase family. The cofactor is Mn(2+).

It is found in the cytoplasm. It carries out the reaction 2-deoxy-alpha-D-ribose 1-phosphate = 2-deoxy-D-ribose 5-phosphate. It catalyses the reaction alpha-D-ribose 1-phosphate = D-ribose 5-phosphate. It participates in carbohydrate degradation; 2-deoxy-D-ribose 1-phosphate degradation; D-glyceraldehyde 3-phosphate and acetaldehyde from 2-deoxy-alpha-D-ribose 1-phosphate: step 1/2. Isomerase that catalyzes the conversion of deoxy-ribose 1-phosphate (dRib-1-P) and ribose 1-phosphate (Rib-1-P) to deoxy-ribose 5-phosphate (dRib-5-P) and ribose 5-phosphate (Rib-5-P), respectively. The chain is Phosphopentomutase from Streptococcus equi subsp. zooepidemicus (strain H70).